The following is a 735-amino-acid chain: Ion-translocating oxidoreductase complex subunit C (735 aa).

4Fe-4S ferredoxin-type domains are found at residues Met368–Tyr397 and Lys407–Phe436. [4Fe-4S] cluster contacts are provided by Cys377, Cys380, Cys383, Cys387, Cys416, Cys419, Cys422, and Cys426. The tract at residues Gln534–Ala715 is disordered. A compositionally biased stretch (low complexity) spans Gln666 to Arg689.

The protein belongs to the 4Fe4S bacterial-type ferredoxin family. RnfC subfamily. As to quaternary structure, the complex is composed of six subunits: RsxA, RsxB, RsxC, RsxD, RsxE and RsxG. Requires [4Fe-4S] cluster as cofactor.

The protein localises to the cell inner membrane. Part of a membrane-bound complex that couples electron transfer with translocation of ions across the membrane. Required to maintain the reduced state of SoxR. In Salmonella paratyphi B (strain ATCC BAA-1250 / SPB7), this protein is Ion-translocating oxidoreductase complex subunit C.